We begin with the raw amino-acid sequence, 824 residues long: Glycogen phosphorylase (824 aa).

The residue at position 667 (lysine 667) is an N6-(pyridoxal phosphate)lysine.

It belongs to the glycogen phosphorylase family. The cofactor is pyridoxal 5'-phosphate.

It carries out the reaction [(1-&gt;4)-alpha-D-glucosyl](n) + phosphate = [(1-&gt;4)-alpha-D-glucosyl](n-1) + alpha-D-glucose 1-phosphate. Its function is as follows. Phosphorylase is an important allosteric enzyme in carbohydrate metabolism. Enzymes from different sources differ in their regulatory mechanisms and in their natural substrates. However, all known phosphorylases share catalytic and structural properties. The chain is Glycogen phosphorylase (glgP) from Chlamydia pneumoniae (Chlamydophila pneumoniae).